A 113-amino-acid chain; its full sequence is Large ribosomal subunit protein uL22 (113 aa).

It belongs to the universal ribosomal protein uL22 family. In terms of assembly, part of the 50S ribosomal subunit.

Functionally, this protein binds specifically to 23S rRNA; its binding is stimulated by other ribosomal proteins, e.g. L4, L17, and L20. It is important during the early stages of 50S assembly. It makes multiple contacts with different domains of the 23S rRNA in the assembled 50S subunit and ribosome. The globular domain of the protein is located near the polypeptide exit tunnel on the outside of the subunit, while an extended beta-hairpin is found that lines the wall of the exit tunnel in the center of the 70S ribosome. The polypeptide is Large ribosomal subunit protein uL22 (Desulforudis audaxviator (strain MP104C)).